The sequence spans 208 residues: Large ribosomal subunit protein uL4 (208 aa).

The segment at 47–84 is disordered; that stretch reads ARAARERSDVARTGKKFGRQKGGGTARHGDRRAPVFIG. The segment covering 49 to 58 has biased composition (basic and acidic residues); it reads AARERSDVAR.

This sequence belongs to the universal ribosomal protein uL4 family. In terms of assembly, part of the 50S ribosomal subunit.

One of the primary rRNA binding proteins, this protein initially binds near the 5'-end of the 23S rRNA. It is important during the early stages of 50S assembly. It makes multiple contacts with different domains of the 23S rRNA in the assembled 50S subunit and ribosome. Its function is as follows. Forms part of the polypeptide exit tunnel. The protein is Large ribosomal subunit protein uL4 of Rhizorhabdus wittichii (strain DSM 6014 / CCUG 31198 / JCM 15750 / NBRC 105917 / EY 4224 / RW1) (Sphingomonas wittichii).